The sequence spans 2256 residues: Death-inducer obliterator 1 (2256 aa).

N-acetylmethionine is present on M1. Residues 1–25 (MDDKGHLSNEEAPKAIKPTSKEFRK) are compositionally biased toward basic and acidic residues. The segment at 1 to 256 (MDDKGHLSNE…NPREAGKPKP (256 aa)) is disordered. Composition is skewed to polar residues over residues 48-59 (SEQQPQQHNLSL) and 96-119 (EPTSSTVTDVETASEGSVESSSEI). Phosphoserine occurs at positions 58 and 112. Residues 128 to 142 (LGKEHPASSEKAKGG) show a composition bias toward basic and acidic residues. Acidic residues predominate over residues 143-153 (EEEEDTSDSDS). Phosphothreonine is present on T148. Phosphoserine occurs at positions 149 and 151. 2 short sequence motifs (nuclear localization signal) span residues 162–170 (QNRLRRKRE) and 182–190 (QNRLRKKRR). Positions 169–178 (REQEPVERSL) are enriched in basic and acidic residues. Basic and acidic residues-rich tracts occupy residues 206–216 (EQDRPLCKQEP) and 246–256 (ENPREAGKPKP). The PHD-type zinc-finger motif lies at 265 to 319 (ALYCICRQPHNNRFMICCDRCEEWFHGDCVGISEARGRLLERNGEDYICPNCTIL). 7 disordered regions span residues 481 to 535 (LASR…DDRR), 598 to 624 (RPWPSATLSGTSARQAGPTPMTAASKK), 641 to 668 (ANVPAASPAPGRLGPVSPAPSQPNSQIR), 778 to 822 (SRTK…PEKS), 856 to 970 (QVPS…TALS), 1011 to 1039 (AKPSSSPDPRYLSVPPSPSISESRSPPEG), and 1197 to 1218 (PSSAGELDKTDEKRTRLQQEEL). Over residues 495–506 (ESSTPSWASDHN) the composition is skewed to polar residues. S522 carries the post-translational modification Phosphoserine. Residues 667 to 787 (IRQNIRRSLK…SRTKLLNESK (121 aa)) enclose the TFIIS central domain. Positions 778–788 (SRTKLLNESKK) are enriched in basic and acidic residues. Over residues 797-812 (PDMEDSPPVSDSEEQQ) the composition is skewed to acidic residues. Residues S802 and S806 each carry the phosphoserine modification. 2 stretches are compositionally biased toward basic and acidic residues: residues 875-886 (SKKEDFKPRHDS) and 921-935 (QERKCFPESPGDSHP). K876 participates in a covalent cross-link: Glycyl lysine isopeptide (Lys-Gly) (interchain with G-Cter in SUMO2). The residue at position 886 (S886) is a Phosphoserine. Positions 937–962 (PSSLGGLSPSSASGGSGVVTTVTMSG) are enriched in low complexity. Phosphoserine is present on residues S1016, S1027, and S1035. Residues 1202–1215 (ELDKTDEKRTRLQQ) show a composition bias toward basic and acidic residues. Y1239 bears the Phosphotyrosine mark. A disordered region spans residues 1245–1288 (DTAATSTTPPGSPPPPPPLPEPPVLKILSSLKPGSTSTVTAPTT). T1252 bears the Phosphothreonine mark. Pro residues predominate over residues 1254–1267 (PGSPPPPPPLPEPP). S1256 bears the Phosphoserine mark. Over residues 1279-1288 (STSTVTAPTT) the composition is skewed to low complexity. S1307 bears the Phosphoserine mark. Disordered regions lie at residues 1320–1347 (KKSFEPSGKESVGSTLSPHQDSKAKGED), 1362–1421 (FGQF…VAYD), 1509–1609 (SDAL…EAKE), and 1630–2256 (QKCE…AAQA). A compositionally biased stretch (acidic residues) spans 1371-1387 (LEEEEEDDRPYDPEEEY). S1514 is modified (phosphoserine). Residues 1526-1546 (LFSQEQQAPDPSQGAPNTNHN) are compositionally biased toward polar residues. Over residues 1547-1557 (LDSRQSRDPRQ) the composition is skewed to basic and acidic residues. Low complexity predominate over residues 1649 to 1666 (PTAGDGAARPAPPRRVLL). Residues 1667–1679 (PTPPSTTFPPSFP) show a composition bias toward pro residues. The segment covering 1699–1712 (TFMSQETSLGSSQY) has biased composition (polar residues). S1726 bears the Phosphoserine mark. Over residues 1783-1792 (FPGPRGPVPP) the composition is skewed to pro residues. R1848 is subject to Omega-N-methylarginine. Residues 1855 to 1869 (FEDRKDPHGEKREFQ) show a composition bias toward basic and acidic residues. Residues R1904, R1905, R1988, R1993, R2004, R2019, and R2035 each carry the asymmetric dimethylarginine modification. Composition is skewed to basic and acidic residues over residues 2081-2113 (EFREGKGHEYRSPAFEGRQRERFEAGSKEKPLD) and 2123-2246 (RQGR…EART).

As to quaternary structure, interacts specifically (via PHD-type zinc finger) with histone H3 that is trimethylated at 'Lys-4' (H3K4me3), histone phosphorylation at 'Thr-3' or 'Thr-6' disrupts this binding and promotes translocation of DIDO1 from chromatin to the mitotic spindle during mitosis. As to expression, ubiquitous. Expressed at intermediate levels.

Its subcellular location is the cytoplasm. The protein resides in the nucleus. The protein localises to the cytoskeleton. It is found in the spindle. Functionally, required for early embryonic stem cell development. Putative transcription factor, weakly pro-apoptotic when overexpressed. The protein is Death-inducer obliterator 1 (Dido1) of Mus musculus (Mouse).